Consider the following 255-residue polypeptide: MDIGIDLLAILFCVGFVASFIDAIAGGGGLITIPALLMTGMPPAMALGTNKLQAMGGALSASLYFLRKRAVNLRDIWFILIWVFLGSALGTLLIQSIDVAIFKKMLPFLILAIGLYFLFTPKLGDEDRKQRLSYLLFGLLVSPFLGFYDGFFGPGTGSIMSLACVTLLGFNLPKAAAHAKVMNFTSNLASFALFLLGGQILWKVGFVMMAGSILGANLGAKMVMTKGKTLIRPMVVIMSFMMTAKMVYDQGWFHF.

Transmembrane regions (helical) follow at residues 7–27 (LLAILFCVGFVASFIDAIAGG), 28–48 (GGLITIPALLMTGMPPAMALG), 76–96 (IWFILIWVFLGSALGTLLIQS), 99–119 (VAIFKKMLPFLILAIGLYFLF), 132–152 (LSYLLFGLLVSPFLGFYDGFF), 153–173 (GPGTGSIMSLACVTLLGFNLP), 191–211 (FALFLLGGQILWKVGFVMMAG), and 235–255 (VVIMSFMMTAKMVYDQGWFHF).

The protein belongs to the 4-toluene sulfonate uptake permease (TSUP) (TC 2.A.102) family.

The protein resides in the cell membrane. In Haemophilus influenzae (strain ATCC 51907 / DSM 11121 / KW20 / Rd), this protein is Probable membrane transporter protein HI_0198.